The primary structure comprises 263 residues: Small ribosomal subunit protein eS4, X isoform (263 aa).

Residues 42-104 (LPLIIFLRNR…TGEHFRLVYD (63 aa)) form the S4 RNA-binding domain. Lysine 230 participates in a covalent cross-link: Glycyl lysine isopeptide (Lys-Gly) (interchain with G-Cter in SUMO2). The residue at position 233 (lysine 233) is an N6-acetyllysine.

The protein belongs to the eukaryotic ribosomal protein eS4 family. As to quaternary structure, component of the small ribosomal subunit. Part of the small subunit (SSU) processome, composed of more than 70 proteins and the RNA chaperone small nucleolar RNA (snoRNA) U3. Identified in a IGF2BP1-dependent mRNP granule complex containing untranslated mRNAs.

The protein localises to the cytoplasm. It localises to the nucleus. Its subcellular location is the nucleolus. Component of the small ribosomal subunit. The ribosome is a large ribonucleoprotein complex responsible for the synthesis of proteins in the cell. Part of the small subunit (SSU) processome, first precursor of the small eukaryotic ribosomal subunit. During the assembly of the SSU processome in the nucleolus, many ribosome biogenesis factors, an RNA chaperone and ribosomal proteins associate with the nascent pre-rRNA and work in concert to generate RNA folding, modifications, rearrangements and cleavage as well as targeted degradation of pre-ribosomal RNA by the RNA exosome. This is Small ribosomal subunit protein eS4, X isoform (RPS4X) from Monodelphis domestica (Gray short-tailed opossum).